The following is a 198-amino-acid chain: V-type proton ATPase subunit E (198 aa).

It belongs to the V-ATPase E subunit family.

In terms of biological role, produces ATP from ADP in the presence of a proton gradient across the membrane. The sequence is that of V-type proton ATPase subunit E from Borrelia turicatae (strain 91E135).